A 404-amino-acid chain; its full sequence is Probable glucan endo-1,6-beta-glucosidase B (404 aa).

The signal sequence occupies residues 1-20; that stretch reads MTTYQTLFLIPLAISTLVTA. N-linked (GlcNAc...) asparagine glycosylation is found at Asn-33 and Asn-130. Catalysis depends on Glu-222, which acts as the Proton donor. N-linked (GlcNAc...) asparagine glycosylation is found at Asn-253 and Asn-299. Glu-324 acts as the Nucleophile in catalysis.

It belongs to the glycosyl hydrolase 5 (cellulase A) family.

It localises to the secreted. The enzyme catalyses Random hydrolysis of (1-&gt;6)-linkages in (1-&gt;6)-beta-D-glucans.. In terms of biological role, beta-glucanases participate in the metabolism of beta-glucan, the main structural component of the cell wall. Acts on lutean, pustulan and 1,6-oligo-beta-D-glucosides. The polypeptide is Probable glucan endo-1,6-beta-glucosidase B (exgB) (Aspergillus terreus (strain NIH 2624 / FGSC A1156)).